The following is a 347-amino-acid chain: Hydroxymethylglutaryl-CoA synthase (347 aa).

(3S)-3-hydroxy-3-methylglutaryl-CoA-binding residues include aspartate 29 and alanine 30. The Proton donor/acceptor role is filled by glutamate 80. Residues cysteine 112 and threonine 153 each coordinate (3S)-3-hydroxy-3-methylglutaryl-CoA. Cysteine 112 (acyl-thioester intermediate) is an active-site residue. Residue arginine 199 coordinates CoA. (3S)-3-hydroxy-3-methylglutaryl-CoA contacts are provided by threonine 201 and histidine 234. Histidine 234 (proton donor/acceptor) is an active-site residue. Lysine 239 lines the CoA pocket. Positions 243, 266, and 296 each coordinate (3S)-3-hydroxy-3-methylglutaryl-CoA.

The protein belongs to the thiolase-like superfamily. Archaeal HMG-CoA synthase family. In terms of assembly, interacts with acetoacetyl-CoA thiolase that catalyzes the precedent step in the pathway and with a DUF35 protein. The acetoacetyl-CoA thiolase/HMG-CoA synthase complex channels the intermediate via a fused CoA-binding site, which allows for efficient coupling of the endergonic thiolase reaction with the exergonic HMGCS reaction.

The catalysed reaction is acetoacetyl-CoA + acetyl-CoA + H2O = (3S)-3-hydroxy-3-methylglutaryl-CoA + CoA + H(+). The protein operates within metabolic intermediate biosynthesis; (R)-mevalonate biosynthesis; (R)-mevalonate from acetyl-CoA: step 2/3. Functionally, catalyzes the condensation of acetyl-CoA with acetoacetyl-CoA to form 3-hydroxy-3-methylglutaryl-CoA (HMG-CoA). Functions in the mevalonate (MVA) pathway leading to isopentenyl diphosphate (IPP), a key precursor for the biosynthesis of isoprenoid compounds that are building blocks of archaeal membrane lipids. This Methanocella arvoryzae (strain DSM 22066 / NBRC 105507 / MRE50) protein is Hydroxymethylglutaryl-CoA synthase.